Reading from the N-terminus, the 123-residue chain is UPF0738 protein BCE_1319 (123 aa).

It belongs to the UPF0738 family.

In Bacillus cereus (strain ATCC 10987 / NRS 248), this protein is UPF0738 protein BCE_1319.